Reading from the N-terminus, the 71-residue chain is Large ribosomal subunit protein bL31 (71 aa).

The Zn(2+) site is built by Cys-16, Cys-18, Cys-37, and Cys-40.

This sequence belongs to the bacterial ribosomal protein bL31 family. Type A subfamily. Part of the 50S ribosomal subunit. It depends on Zn(2+) as a cofactor.

Binds the 23S rRNA. The polypeptide is Large ribosomal subunit protein bL31 (Yersinia pseudotuberculosis serotype O:1b (strain IP 31758)).